The primary structure comprises 78 residues: Protein SlyX homolog (78 aa).

Belongs to the SlyX family.

The chain is Protein SlyX homolog from Xanthomonas campestris pv. campestris (strain 8004).